The primary structure comprises 622 residues: Polypeptide N-acetylgalactosaminyltransferase 6 (622 aa).

The Cytoplasmic segment spans residues 1–8 (MRLLRRRH). Residues 9–28 (MSLRLAMLGSVFMLFLFIRQ) traverse the membrane as a helical; Signal-anchor for type II membrane protein segment. Topologically, residues 29–622 (KDVSNQEQAM…RDPYQLWLFV (594 aa)) are lumenal. N86 is a glycosylation site (N-linked (GlcNAc...) asparagine). Positions 176-285 (LPTTSVIIVF…HGWLEPLLAR (110 aa)) are catalytic subdomain A. Residues D269, H271, and H407 each contribute to the Mn(2+) site. Positions 348–410 (PIKSPTFAGG…PCSVVGHVFR (63 aa)) are catalytic subdomain B. An N-linked (GlcNAc...) asparagine glycan is attached at N476. The region spanning 506 to 622 (TNQCLDVGEN…RDPYQLWLFV (117 aa)) is the Ricin B-type lectin domain. A disulfide bond links C509 and C527. 4 residues coordinate UDP-N-acetyl-alpha-D-galactosamine: D511, E514, H528, and N533. Disulfide bonds link C553/C566 and C597/C610.

This sequence belongs to the glycosyltransferase 2 family. GalNAc-T subfamily. The cofactor is Mn(2+).

It localises to the golgi apparatus membrane. The enzyme catalyses L-seryl-[protein] + UDP-N-acetyl-alpha-D-galactosamine = a 3-O-[N-acetyl-alpha-D-galactosaminyl]-L-seryl-[protein] + UDP + H(+). It carries out the reaction L-threonyl-[protein] + UDP-N-acetyl-alpha-D-galactosamine = a 3-O-[N-acetyl-alpha-D-galactosaminyl]-L-threonyl-[protein] + UDP + H(+). Its pathway is protein modification; protein glycosylation. Catalyzes the initial reaction in O-linked oligosaccharide biosynthesis, the transfer of an N-acetyl-D-galactosamine residue to a serine or threonine residue on the protein receptor. May participate in synthesis of oncofetal fibronectin. Has activity toward Muc1a, Muc2, EA2 and fibronectin peptides. This Mus musculus (Mouse) protein is Polypeptide N-acetylgalactosaminyltransferase 6 (Galnt6).